A 536-amino-acid chain; its full sequence is Membrane protein insertase YidC (536 aa).

A helical transmembrane segment spans residues 14 to 34; sequence ILIATAISLLFFIPYSYFFAP. The segment at 43–69 is disordered; sequence STSMERAEQQAAPQTSSSPKEGQVSSV. A compositionally biased stretch (polar residues) spans 53–68; that stretch reads AAPQTSSSPKEGQVSS. A run of 5 helical transmembrane segments spans residues 312–332, 339–359, 401–421, 436–456, and 484–504; these read VVEYGFITFFAKPLFLLLDWL, WGWAIVLLTLVVRIILFPLTY, GANPMGGCLPLLLQMPIFFAI, WILWINDLSVMDPYFILPILM, and PLIFTFFFVTFPSGLVLYWFV.

This sequence belongs to the OXA1/ALB3/YidC family. Type 1 subfamily. In terms of assembly, interacts with the Sec translocase complex via SecD. Specifically interacts with transmembrane segments of nascent integral membrane proteins during membrane integration.

The protein localises to the cell inner membrane. Required for the insertion and/or proper folding and/or complex formation of integral membrane proteins into the membrane. Involved in integration of membrane proteins that insert both dependently and independently of the Sec translocase complex, as well as at least some lipoproteins. Aids folding of multispanning membrane proteins. The protein is Membrane protein insertase YidC of Wolinella succinogenes (strain ATCC 29543 / DSM 1740 / CCUG 13145 / JCM 31913 / LMG 7466 / NCTC 11488 / FDC 602W) (Vibrio succinogenes).